Here is a 274-residue protein sequence, read N- to C-terminus: Large ribosomal subunit protein uL2cz/uL2cy (274 aa).

Disordered regions lie at residues 1-25 and 224-274; these read MAIH…VKSN and NPVD…RRSK.

The protein belongs to the universal ribosomal protein uL2 family. As to quaternary structure, part of the 50S ribosomal subunit.

It localises to the plastid. It is found in the chloroplast. The polypeptide is Large ribosomal subunit protein uL2cz/uL2cy (rpl2-A) (Cucumis sativus (Cucumber)).